We begin with the raw amino-acid sequence, 521 residues long: DNA damage-binding protein cmr1 (521 aa).

Residues D36 to A75 are disordered. Over residues V55–R66 the composition is skewed to basic and acidic residues. WD repeat units lie at residues I183–E224, T242–I282, L333–D373, E382–A422, and D490–M521.

The protein belongs to the WD repeat DDB2/WDR76 family.

In terms of biological role, DNA-binding protein that binds to both single- and double-stranded DNA. Binds preferentially to UV-damaged DNA. May be involved in DNA-metabolic processes. The sequence is that of DNA damage-binding protein cmr1 from Neurospora crassa (strain ATCC 24698 / 74-OR23-1A / CBS 708.71 / DSM 1257 / FGSC 987).